The following is a 319-amino-acid chain: MISEIIKDRAKLVNEKIEELLKEQEPEGLYRAARHYLKAGGKRLRPVITLLSAEALGEDYRKAIHAAIAIETVHNFTLVHDDIMDEDEMRRGVKTVHTLFGIPTAILAGDTLYAEAFEILSMSDAPPENIVRAVSKLARVCVEICEGQFMDMSFEERDSVGESEYLEMVRKKTGVLIGISASIPAVLFGKDESVEKALWNYGIYSGIGFQIHDDLLDISGKGKIGKDWGSDILEGKKTLIVIKAFEEGIELETFGKGRASEEELERDIKKLFDCGAVDYARERAREYIEMAKKNLEVIDESPSRNYLVELADYLIERDH.

Positions 42, 45, and 74 each coordinate isopentenyl diphosphate. Mg(2+) is bound by residues Asp81 and Asp85. A dimethylallyl diphosphate-binding site is contributed by Arg90. An isopentenyl diphosphate-binding site is contributed by Arg91. Lys172, Thr173, Gln210, Lys226, and Lys236 together coordinate dimethylallyl diphosphate.

This sequence belongs to the FPP/GGPP synthase family. As to quaternary structure, homodimer. Mg(2+) is required as a cofactor.

The enzyme catalyses isopentenyl diphosphate + dimethylallyl diphosphate = (2E)-geranyl diphosphate + diphosphate. It catalyses the reaction isopentenyl diphosphate + (2E)-geranyl diphosphate = (2E,6E)-farnesyl diphosphate + diphosphate. It carries out the reaction isopentenyl diphosphate + (2E,6E)-farnesyl diphosphate = (2E,6E,10E)-geranylgeranyl diphosphate + diphosphate. It participates in isoprenoid biosynthesis; geranyl diphosphate biosynthesis; geranyl diphosphate from dimethylallyl diphosphate and isopentenyl diphosphate: step 1/1. The protein operates within isoprenoid biosynthesis; farnesyl diphosphate biosynthesis; farnesyl diphosphate from geranyl diphosphate and isopentenyl diphosphate: step 1/1. Its pathway is isoprenoid biosynthesis; geranylgeranyl diphosphate biosynthesis; geranylgeranyl diphosphate from farnesyl diphosphate and isopentenyl diphosphate: step 1/1. In terms of biological role, catalyzes the addition of 3 molecules of isopentenyl diphosphate (IPP) onto dimethylallyl diphosphate (DMAPP) to form geranylgeranyl pyrophosphate (GGPP). Catalyzes the synthesis of geranylgeranyl pyrophosphate as a major product and of farnesyl pyrophosphate in smaller amounts. This is Geranylgeranyl pyrophosphate synthase from Geoglobus acetivorans.